Here is a 998-residue protein sequence, read N- to C-terminus: Bifunctional glutamine synthetase adenylyltransferase/adenylyl-removing enzyme (998 aa).

The tract at residues 1 to 487 (MVVTKPATQR…LHAKLFYQPL (487 aa)) is adenylyl removase. The adenylyl transferase stretch occupies residues 492–998 (GPAGLEIRHG…KAVVRKVFGS (507 aa)).

The protein belongs to the GlnE family. It depends on Mg(2+) as a cofactor.

The enzyme catalyses [glutamine synthetase]-O(4)-(5'-adenylyl)-L-tyrosine + phosphate = [glutamine synthetase]-L-tyrosine + ADP. The catalysed reaction is [glutamine synthetase]-L-tyrosine + ATP = [glutamine synthetase]-O(4)-(5'-adenylyl)-L-tyrosine + diphosphate. In terms of biological role, involved in the regulation of glutamine synthetase GlnA, a key enzyme in the process to assimilate ammonia. When cellular nitrogen levels are high, the C-terminal adenylyl transferase (AT) inactivates GlnA by covalent transfer of an adenylyl group from ATP to specific tyrosine residue of GlnA, thus reducing its activity. Conversely, when nitrogen levels are low, the N-terminal adenylyl removase (AR) activates GlnA by removing the adenylyl group by phosphorolysis, increasing its activity. The regulatory region of GlnE binds the signal transduction protein PII (GlnB) which indicates the nitrogen status of the cell. In Mycobacterium avium (strain 104), this protein is Bifunctional glutamine synthetase adenylyltransferase/adenylyl-removing enzyme.